The sequence spans 194 residues: Lymphocyte antigen 6 complex locus protein G5b (194 aa).

The first 18 residues, 1–18, serve as a signal peptide directing secretion; the sequence is MRACVLVHVLTMVGFALG. The region spanning 26–118 is the UPAR/Ly6 domain; that stretch reads RTCHLCFLED…SAQHQSTLPG (93 aa). Intrachain disulfides connect Cys-28–Cys-55, Cys-31–Cys-40, Cys-47–Cys-73, Cys-81–Cys-98, and Cys-99–Cys-104. A glycan (N-linked (GlcNAc...) asparagine) is linked at Asn-182.

N-glycosylated.

It is found in the secreted. The sequence is that of Lymphocyte antigen 6 complex locus protein G5b (Ly6g5b) from Rattus norvegicus (Rat).